The chain runs to 194 residues: Large ribosomal subunit protein bL27c (194 aa).

The N-terminal 57 residues, 1–57 (MAVTTSMSFNLMASFRGMSLSSSSSSSFFKGEFGPSSLRLPNKSPLSVSPFPLTIES), are a transit peptide targeting the chloroplast. The segment at 57-76 (SAHKKGAGSTKNGRDSKGQR) is disordered.

As to quaternary structure, component of the chloroplast large ribosomal subunit (LSU). Mature 70S chloroplast ribosomes of higher plants consist of a small (30S) and a large (50S) subunit. The 30S small subunit contains 1 molecule of ribosomal RNA (16S rRNA) and 24 different proteins. The 50S large subunit contains 3 rRNA molecules (23S, 5S and 4.5S rRNA) and 33 different proteins.

The protein resides in the plastid. The protein localises to the chloroplast. Component of the chloroplast ribosome (chloro-ribosome), a dedicated translation machinery responsible for the synthesis of chloroplast genome-encoded proteins, including proteins of the transcription and translation machinery and components of the photosynthetic apparatus. This Spinacia oleracea (Spinach) protein is Large ribosomal subunit protein bL27c (RPL27).